The chain runs to 112 residues: uncharacterized protein (112 aa).

The next 2 helical transmembrane spans lie at 55 to 75 and 91 to 111; these read LLEINLLVAATVIHLIAPTLF and LIMLGLRIAVLLAKQLLLLLL.

It localises to the membrane. This is an uncharacterized protein from Saccharomyces cerevisiae (strain ATCC 204508 / S288c) (Baker's yeast).